The sequence spans 873 residues: DNA mismatch repair protein MutS (873 aa).

Residue 601-608 (GPNMSGKS) participates in ATP binding.

It belongs to the DNA mismatch repair MutS family.

Its function is as follows. This protein is involved in the repair of mismatches in DNA. It is possible that it carries out the mismatch recognition step. This protein has a weak ATPase activity. The protein is DNA mismatch repair protein MutS of Staphylococcus epidermidis (strain ATCC 12228 / FDA PCI 1200).